A 430-amino-acid polypeptide reads, in one-letter code: Long-chain specific acyl-CoA dehydrogenase, mitochondrial (430 aa).

A mitochondrion-targeting transit peptide spans 1-30; that stretch reads MATRLLRGSLRLWGGLCAPRLPTASRCSHS. Position 42 is an N6-acetyllysine (Lys-42). 2 positions are modified to phosphoserine: Ser-54 and Ser-55. An N6-acetyllysine; alternate mark is found at Lys-66 and Lys-81. N6-succinyllysine; alternate is present on residues Lys-66 and Lys-81. N6-acetyllysine occurs at positions 92 and 95. An N6-succinyllysine modification is found at Lys-165. Residues 170–179 and 203–205 contribute to the FAD site; these read IAMTEPGAGS and FIT. Ser-179 is a binding site for substrate. 227-228 serves as a coordination point for substrate; that stretch reads AH. Lys-240 carries the N6-succinyllysine modification. An N6-acetyllysine; alternate mark is found at Lys-254 and Lys-279. Lys-254 and Lys-279 each carry N6-succinyllysine; alternate. Substrate is bound by residues Tyr-282 and 289–292; that span reads PQER. Catalysis depends on Glu-291, which acts as the Proton acceptor. FAD is bound at residue Arg-317. At Lys-318 the chain carries N6-acetyllysine. At Lys-322 the chain carries N6-acetyllysine; alternate. Lys-322 is subject to N6-succinyllysine; alternate. An FAD-binding site is contributed by Gln-328. The residue at position 358 (Lys-358) is an N6-acetyllysine. A Phosphoserine modification is found at Ser-362. 385–389 serves as a coordination point for FAD; it reads QLHGG. 412–413 lines the substrate pocket; that stretch reads GG. Position 414–416 (414–416) interacts with FAD; the sequence is TNE.

The protein belongs to the acyl-CoA dehydrogenase family. Homotetramer. FAD serves as cofactor. In terms of processing, acetylation at Lys-318 and Lys-322 in proximity of the cofactor-binding sites strongly reduces catalytic activity. These sites are deacetylated by SIRT3.

The protein resides in the mitochondrion matrix. The enzyme catalyses a long-chain 2,3-saturated fatty acyl-CoA + oxidized [electron-transfer flavoprotein] + H(+) = a long-chain (2E)-enoyl-CoA + reduced [electron-transfer flavoprotein]. It catalyses the reaction hexanoyl-CoA + oxidized [electron-transfer flavoprotein] + H(+) = (2E)-hexenoyl-CoA + reduced [electron-transfer flavoprotein]. The catalysed reaction is octanoyl-CoA + oxidized [electron-transfer flavoprotein] + H(+) = (2E)-octenoyl-CoA + reduced [electron-transfer flavoprotein]. It carries out the reaction decanoyl-CoA + oxidized [electron-transfer flavoprotein] + H(+) = (2E)-decenoyl-CoA + reduced [electron-transfer flavoprotein]. The enzyme catalyses dodecanoyl-CoA + oxidized [electron-transfer flavoprotein] + H(+) = (2E)-dodecenoyl-CoA + reduced [electron-transfer flavoprotein]. It catalyses the reaction tetradecanoyl-CoA + oxidized [electron-transfer flavoprotein] + H(+) = (2E)-tetradecenoyl-CoA + reduced [electron-transfer flavoprotein]. The catalysed reaction is oxidized [electron-transfer flavoprotein] + hexadecanoyl-CoA + H(+) = (2E)-hexadecenoyl-CoA + reduced [electron-transfer flavoprotein]. It carries out the reaction octadecanoyl-CoA + oxidized [electron-transfer flavoprotein] + H(+) = (2E)-octadecenoyl-CoA + reduced [electron-transfer flavoprotein]. The enzyme catalyses eicosanoyl-CoA + oxidized [electron-transfer flavoprotein] + H(+) = (2E)-eicosenoyl-CoA + reduced [electron-transfer flavoprotein]. It catalyses the reaction docosanoyl-CoA + oxidized [electron-transfer flavoprotein] + H(+) = (2E)-docosenoyl-CoA + reduced [electron-transfer flavoprotein]. The catalysed reaction is tetracosanoyl-CoA + oxidized [electron-transfer flavoprotein] + H(+) = (2E)-tetracosenoyl-CoA + reduced [electron-transfer flavoprotein]. It carries out the reaction (5E)-tetradecenoyl-CoA + oxidized [electron-transfer flavoprotein] + H(+) = (2E,5E)-tetradecadienoyl-CoA + reduced [electron-transfer flavoprotein]. The enzyme catalyses (5Z)-tetradecenoyl-CoA + oxidized [electron-transfer flavoprotein] + H(+) = (2E,5Z)-tetradecadienoyl-CoA + reduced [electron-transfer flavoprotein]. It catalyses the reaction oxidized [electron-transfer flavoprotein] + (9Z)-octadecenoyl-CoA + H(+) = (2E,9Z)-octadecadienoyl-CoA + reduced [electron-transfer flavoprotein]. The protein operates within lipid metabolism; mitochondrial fatty acid beta-oxidation. In terms of biological role, long-chain specific acyl-CoA dehydrogenase is one of the acyl-CoA dehydrogenases that catalyze the first step of mitochondrial fatty acid beta-oxidation, an aerobic process breaking down fatty acids into acetyl-CoA and allowing the production of energy from fats. The first step of fatty acid beta-oxidation consists in the removal of one hydrogen from C-2 and C-3 of the straight-chain fatty acyl-CoA thioester, resulting in the formation of trans-2-enoyl-CoA. Among the different mitochondrial acyl-CoA dehydrogenases, long-chain specific acyl-CoA dehydrogenase can act on saturated and unsaturated acyl-CoAs with 6 to 24 carbons with a preference for 8 to 18 carbons long primary chains. The protein is Long-chain specific acyl-CoA dehydrogenase, mitochondrial of Sus scrofa (Pig).